Reading from the N-terminus, the 435-residue chain is Histidine--tRNA ligase (435 aa).

Belongs to the class-II aminoacyl-tRNA synthetase family.

The protein resides in the cytoplasm. The enzyme catalyses tRNA(His) + L-histidine + ATP = L-histidyl-tRNA(His) + AMP + diphosphate + H(+). This chain is Histidine--tRNA ligase (hisS), found in Aeropyrum pernix (strain ATCC 700893 / DSM 11879 / JCM 9820 / NBRC 100138 / K1).